A 435-amino-acid chain; its full sequence is Nicotinate phosphoribosyltransferase (435 aa).

His-230 carries the post-translational modification Phosphohistidine; by autocatalysis.

This sequence belongs to the NAPRTase family. In terms of processing, transiently phosphorylated on a His residue during the reaction cycle. Phosphorylation strongly increases the affinity for substrates and increases the rate of nicotinate D-ribonucleotide production. Dephosphorylation regenerates the low-affinity form of the enzyme, leading to product release.

The catalysed reaction is nicotinate + 5-phospho-alpha-D-ribose 1-diphosphate + ATP + H2O = nicotinate beta-D-ribonucleotide + ADP + phosphate + diphosphate. It functions in the pathway cofactor biosynthesis; NAD(+) biosynthesis; nicotinate D-ribonucleotide from nicotinate: step 1/1. Catalyzes the synthesis of beta-nicotinate D-ribonucleotide from nicotinate and 5-phospho-D-ribose 1-phosphate at the expense of ATP. The protein is Nicotinate phosphoribosyltransferase of Vibrio cholerae serotype O1 (strain ATCC 39541 / Classical Ogawa 395 / O395).